Here is a 447-residue protein sequence, read N- to C-terminus: F-box only protein 5 (447 aa).

A phosphoserine mark is found at serine 94 and serine 102. Residues 135-244 form an interaction with EVI5 region; that stretch reads ALETSRLYED…IGRKMGLECV (110 aa). The region spanning 250 to 296 is the F-box domain; that stretch reads LFRRGLRHVLATILAQLSDMDLINVSKVSTTWKKILEDDKGAFQLYS. Residues 261-339 form a sufficient for interaction with RPS6KA2; Prevents association of CDC20 with RPS6KA2 region; the sequence is TILAQLSDMD…KSAAQTSLKK (79 aa). The tract at residues 261-409 is requires for efficient binding to CDC20; sequence TILAQLSDMD…GCGFDYCTKC (149 aa). The segment at 305-447 is inhibits APC ubiquitin ligase activity; the sequence is NNNKFSPHAS…KKSKKNLRRL (143 aa). Residues 322–325 are competitively blocks access of APC substrates to the D-box coreceptor formed by FZR1 and ANAPC10; it reads RTPL. Positions 337-358 are disordered; the sequence is LKKDAQTKLSNQGDQKGSTYSR. A compositionally biased stretch (polar residues) spans 343-357; sequence TKLSNQGDQKGSTYS. A ZBR-type zinc finger spans residues 374-422; sequence SLKACIRCNSPAKYDCYLQRATCKREGCGFDYCTKCLCNYHTTKDCSDG. Zn(2+)-binding residues include cysteine 378, cysteine 381, cysteine 396, cysteine 401, cysteine 406, cysteine 409, histidine 414, and cysteine 419. Positions 378-420 are allows a rapid multiple mono-ubiquitination of the APC substrate, but strongly inhibits the slow ubiquitin chain elongation catalyzed by UBCH10; sequence CIRCNSPAKYDCYLQRATCKREGCGFDYCTKCLCNYHTTKDCS. The segment at 437 to 447 is sufficient to suppress UBE2S activity; essential for interaction with UBE2S; competitively inhibits the rapide ubiquitin chain elongation by UBE2D1 which blocks UBE2D1 with APC; indispensable for recruitment and position of FBXO5 to the catalytic site of APC; abrogates the inhibition of ubiquitin chain assembly primarily catalyzed by UBE2S; inhibits the ubiquitination by either UBE2C or UBE2D1; the sequence is TKKSKKNLRRL.

In terms of assembly, part of a SCF (SKP1-cullin-F-box) protein ligase complex. Interacts with BTRC; mediates proteolysis by the SCF ubiquitin ligase complex leading to activation of APC in late mitosis and subsequent mitotic progression. Interacts with FZR1/CDH1 and the N-terminal substrate-binding domain of CDC20; prevents APC activation. Also interacts with EVI5 which blocks its phosphorylation by PLK1 and prevents its subsequent binding to BTRC and degradation. Interacts simultaneously with anaphase promoting complex (APC), through at least ANAPC2, CDC23, CDC27, the APC substrate GMNN and the APC activator FZR1. Interacts with UBE2S; interferes with the activity of UBE2S mainly by disrupting the dynamic electrostatic association between the C-terminal tail of UBE2S and ANAPC2. Interacts with RPS6KA2; cooperates to induce the metaphase arrest of early blastomeres; increases and stabilizes interaction of FBXO5 with CDC20. In terms of processing, phosphorylation by CDK2 and subsequently by PLK1 triggers degradation during early mitosis through ubiquitin-mediated proteolysis by the SCF ubiquitin ligase complex containing the F-box protein BTRC. This degradation is necessary for the activation of APC in late mitosis and subsequent mitotic progression. Phosphorylated by RPS6KA2; increases and stabilizes interaction with CDC20. Ubiquitinated by the SCF(BTRC) complex following phosphorylation by PLK1. Undergoes both 'Lys-11' and 'Lys-48'-linked polyubiquitination by APC-FZR1 complex leading to degradation by proteasome during G1 phase. Degraded through the SCF(BTRC) complex; degradation occurs during oocyte maturation, between germinal vesicle breakdown (GVBD) and meiosis I, and is required for the meiosis I-meiosis II transition.

The protein resides in the nucleus. The protein localises to the cytoplasm. It localises to the cytoskeleton. It is found in the spindle. It functions in the pathway protein modification; protein ubiquitination. Functionally, regulator of APC activity during mitotic and meiotic cell cycle. During mitotic cell cycle plays a role as both substrate and inhibitor of APC-FZR1 complex. During G1 phase, plays a role as substrate of APC-FZR1 complex E3 ligase. Then switches as an inhibitor of APC-FZR1 complex during S and G2 leading to cell-cycle commitment. As APC inhibitor, prevents the degradation of APC substrates at multiple levels: by interacting with APC and blocking access of APC substrates to the D-box coreceptor, formed by FZR1 and ANAPC10; by suppressing ubiquitin ligation and chain elongation by APC by preventing the UBE2C and UBE2S activities. Plays a role in genome integrity preservation by coordinating DNA replication with mitosis through APC inhibition in interphase to stabilize CCNA2 and GMNN in order to promote mitosis and prevent rereplication and DNA damage-induced cellular senescence. During oocyte maturation, plays a role in meiosis through inactivation of APC-FZR1 complex. Inhibits APC through RPS6KA2 interaction that increases FBXO5 affiniy for CDC20 leading to the metaphase arrest of the second meiotic division before fertilization. Controls entry into the first meiotic division through inactivation of APC-FZR1 complex. Promotes migration and osteogenic differentiation of mesenchymal stem cells. This is F-box only protein 5 from Homo sapiens (Human).